The primary structure comprises 332 residues: 2,3-diketo-L-gulonate reductase (332 aa).

His44 acts as the Proton donor in catalysis. NAD(+) contacts are provided by residues 168–174 (ITMVDMS), 224–225 (WK), and 304–306 (GHE).

The protein belongs to the LDH2/MDH2 oxidoreductase family. DlgD subfamily. As to quaternary structure, homodimer.

Its subcellular location is the cytoplasm. It catalyses the reaction 3-dehydro-L-gulonate + NAD(+) = 2,3-dioxo-L-gulonate + NADH + H(+). The catalysed reaction is 3-dehydro-L-gulonate + NADP(+) = 2,3-dioxo-L-gulonate + NADPH + H(+). Catalyzes the reduction of 2,3-diketo-L-gulonate in the presence of NADH, to form 3-keto-L-gulonate. The sequence is that of 2,3-diketo-L-gulonate reductase from Salmonella newport (strain SL254).